The primary structure comprises 297 residues: Craniofacial development protein 1 (297 aa).

Composition is skewed to acidic residues over residues 1-18 and 25-43; these read MEEF…DEDY and YSED…DGEE. Disordered regions lie at residues 1-154 and 190-221; these read MEEF…ELEK and FFKQ…RSSG. Residues 48–65 show a composition bias toward basic residues; sequence TKGKKRKAQSIPARKRKQ. The span at 69-78 shows a compositional bias: acidic residues; sequence LEEEEEDANE. Phosphoserine is present on residues Ser80, Ser83, and Ser84. Over residues 93-110 the composition is skewed to basic and acidic residues; that stretch reads EQEKGIGAEDARKKKEDE. Ser114 is modified (phosphoserine). Lys148 is covalently cross-linked (Glycyl lysine isopeptide (Lys-Gly) (interchain with G-Cter in SUMO2)). Positions 176–215 are hydrophilic; that stretch reads VTKEVDATSKEAKSFFKQNEKEKPQTNVPAALPSLPAGSG. Residues 190 to 199 show a composition bias toward basic and acidic residues; it reads FFKQNEKEKP. A Phosphoserine modification is found at Ser214. The BCNT-C domain occupies 216–297; sequence LKRSSGMSNL…RDLRLSKMKP (82 aa). N6-methyllysine is present on Lys217. Ser248 is subject to Phosphoserine.

The protein localises to the chromosome. The protein resides in the centromere. Its subcellular location is the kinetochore. Its function is as follows. May play a role during embryogenesis. The polypeptide is Craniofacial development protein 1 (CFDP1) (Camelus dromedarius (Dromedary)).